A 952-amino-acid chain; its full sequence is RNA polymerase-associated protein RapA (952 aa).

The Helicase ATP-binding domain occupies Glu-164–Asp-334. Asp-177–Thr-184 is a binding site for ATP. The DEAH box motif lies at Asp-280–His-283. The region spanning Arg-492–Ile-668 is the Helicase C-terminal domain.

Belongs to the SNF2/RAD54 helicase family. RapA subfamily. Interacts with the RNAP. Has a higher affinity for the core RNAP than for the holoenzyme. Its ATPase activity is stimulated by binding to RNAP.

Functionally, transcription regulator that activates transcription by stimulating RNA polymerase (RNAP) recycling in case of stress conditions such as supercoiled DNA or high salt concentrations. Probably acts by releasing the RNAP, when it is trapped or immobilized on tightly supercoiled DNA. Does not activate transcription on linear DNA. Probably not involved in DNA repair. The chain is RNA polymerase-associated protein RapA from Aliivibrio fischeri (strain ATCC 700601 / ES114) (Vibrio fischeri).